The sequence spans 325 residues: Glutarate 2-hydroxylase (325 aa).

His-160, Asp-162, and His-292 together coordinate Fe cation.

This sequence belongs to the glutarate hydroxylase family. As to quaternary structure, homotetramer. Fe(2+) is required as a cofactor.

The catalysed reaction is glutarate + 2-oxoglutarate + O2 = (S)-2-hydroxyglutarate + succinate + CO2. It participates in amino-acid degradation. Functionally, acts as an alpha-ketoglutarate-dependent dioxygenase catalyzing hydroxylation of glutarate (GA) to L-2-hydroxyglutarate (L2HG). Functions in a L-lysine degradation pathway that proceeds via cadaverine, glutarate and L-2-hydroxyglutarate. The chain is Glutarate 2-hydroxylase from Escherichia coli O6:K15:H31 (strain 536 / UPEC).